The sequence spans 214 residues: tRNA (guanine-N(7)-)-methyltransferase (214 aa).

Glu43, Glu68, Asp95, and Asp117 together coordinate S-adenosyl-L-methionine. Residue Asp117 is part of the active site. Substrate is bound by residues Lys121, Asp153, and 190-193 (TEYE).

This sequence belongs to the class I-like SAM-binding methyltransferase superfamily. TrmB family.

The catalysed reaction is guanosine(46) in tRNA + S-adenosyl-L-methionine = N(7)-methylguanosine(46) in tRNA + S-adenosyl-L-homocysteine. Its pathway is tRNA modification; N(7)-methylguanine-tRNA biosynthesis. Its function is as follows. Catalyzes the formation of N(7)-methylguanine at position 46 (m7G46) in tRNA. The polypeptide is tRNA (guanine-N(7)-)-methyltransferase (Staphylococcus haemolyticus (strain JCSC1435)).